Consider the following 483-residue polypeptide: Regulatory protein ViaA (483 aa).

This sequence belongs to the ViaA family. Homodimer. Interacts with RavA.

Its subcellular location is the cytoplasm. In terms of biological role, component of the RavA-ViaA chaperone complex, which may act on the membrane to optimize the function of some of the respiratory chains. ViaA stimulates the ATPase activity of RavA. This is Regulatory protein ViaA from Cronobacter sakazakii (strain ATCC BAA-894) (Enterobacter sakazakii).